The sequence spans 128 residues: Small nuclear ribonucleoprotein associated homolog 13 (128 aa).

This sequence belongs to the eukaryotic ribosomal protein eL8 family.

The protein localises to the nucleus. It is found in the nucleolus. In terms of biological role, binds to the 5'-stem-loop of U4 snRNA and may play a role in the late stage of spliceosome assembly. The protein undergoes a conformational change upon RNA-binding. The protein is Small nuclear ribonucleoprotein associated homolog 13 of Caenorhabditis elegans.